Here is a 367-residue protein sequence, read N- to C-terminus: Cystinosin (367 aa).

A signal peptide spans M1–S22. Topologically, residues T23–I125 are lumenal. Residues N51, N66, N84, N104, and N107 are each glycosylated (N-linked (GlcNAc...) asparagine). In terms of domain architecture, PQ-loop 1 spans V123–Q189. A helical membrane pass occupies residues I126–W150. Topologically, residues R151 to S159 are cytoplasmic. The chain crosses the membrane as a helical span at residues F160–G179. Residue N166 participates in L-cystine binding. Topologically, residues L180–D202 are lumenal. A helical membrane pass occupies residues S203 to L225. A H(+)-binding site is contributed by D205. Residues Y226–S234 lie on the Cytoplasmic side of the membrane. Residues W235–V257 form a helical membrane-spanning segment. Over G258 to L263 the chain is Lumenal. The PQ-loop 2 domain occupies L263–L328. Residues Q264 to F289 form a helical membrane-spanning segment. L-cystine-binding residues include K273, K280, and Y281. Topologically, residues H290–S298 are cytoplasmic. A helical membrane pass occupies residues I299 to G308. 2 residues coordinate L-cystine: N301 and D305. H(+) is bound at residue D305. Topologically, residues G309–G331 are lumenal. Residues D332–F354 traverse the membrane as a helical segment. H(+) is bound at residue D346. Residues C355–N367 lie on the Cytoplasmic side of the membrane. The short motif at G362–L366 is the Lysosomal targeting motif element.

The protein belongs to the cystinosin family. Interacts with components of the V-ATPase complex. Interacts with components of the Ragulator complex. Interacts with RRAGA/RagA and RRAGC/RagC. Interacts with AP-3 complex subunit mu (AP3M1 or AP3M2).

It localises to the lysosome membrane. It is found in the melanosome membrane. The enzyme catalyses L-cystine(out) + H(+)(out) = L-cystine(in) + H(+)(in). Its activity is regulated as follows. Switches between a lumen- and a cytosol-open conformation: pH induces conformational changes and shifts the equilibrium to facilitate the transition between the lumen- and cytosol-open conformation, thereby promoting cystine transport. Protonation of specific aspartate residues (Asp-205, Asp-305 and Asp-346) favors the cytosol-open conformation. Functionally, cystine/H(+) symporter that mediates export of cystine, the oxidized dimer of cysteine, from lysosomes. Plays an important role in melanin synthesis by catalyzing cystine export from melanosomes, possibly by inhibiting pheomelanin synthesis. In addition to cystine export, also acts as a positive regulator of mTORC1 signaling in kidney proximal tubular cells, via interactions with components of the v-ATPase and Ragulator complexes. Also involved in small GTPase-regulated vesicle trafficking and lysosomal localization of LAMP2A, independently of cystine transporter activity. This Bos taurus (Bovine) protein is Cystinosin.